The sequence spans 87 residues: Toxin Cll3 (87 aa).

The signal sequence occupies residues 1-19 (MNSLLMITACLAVIGTVWA). The region spanning 20–85 (KEGYIVNYYD…VWPLPNKTCY (66 aa)) is the LCN-type CS-alpha/beta domain. Cystine bridges form between Cys-31/Cys-84, Cys-35/Cys-60, Cys-44/Cys-65, and Cys-48/Cys-67. Tyr-85 bears the Tyrosine amide mark.

This sequence belongs to the long (4 C-C) scorpion toxin superfamily. Sodium channel inhibitor family. Beta subfamily. Expressed by the venom gland.

It is found in the secreted. Its function is as follows. Beta toxins bind voltage-independently at site-4 of sodium channels (Nav) and shift the voltage of activation toward more negative potentials thereby affecting sodium channel activation and promoting spontaneous and repetitive firing. The sequence is that of Toxin Cll3 from Centruroides limpidus (Mexican scorpion).